We begin with the raw amino-acid sequence, 223 residues long: MEVQKEAQRIMTLSVWKMYHSRMQRGGLRLHRSLQLSLVMRSARELYLSAKVEALEPEVSLPAALPSDPRLHPPREAESTAETATPDGEHPFPEPMDTQEAPTAEETSACCAPRPAKVSRKRRSSSLSDGGDAGLVPSKKARLEEKEEEEGASSEVADRLQPPPAQAEGAFPNLARVLQRRFSGLLNCSPAAPPTAPPACEAKPACRPADSMLNVLVRAVVAF.

Met1 is subject to N-acetylmethionine. Positions 63 to 172 (AALPSDPRLH…PPAQAEGAFP (110 aa)) are disordered. Positions 69 to 78 (PRLHPPREAE) are enriched in basic and acidic residues. Low complexity predominate over residues 125–138 (SSLSDGGDAGLVPS).

The protein belongs to the IER family. Expressed in activated T-cells (at protein level). Expression increases in metastatic tumor cells (at protein level).

The protein localises to the cytoplasm. It localises to the nucleus. Functionally, DNA-binding protein that seems to act as a transcription factor. Involved in the regulation of neuronal differentiation, acts upon JNK-signaling pathway activation and plays a role in neurite outgrowth in hippocampal cells. May mediate with FIBP FGF-signaling in the establishment of laterality in the embryo. Promotes cell motility, seems to stimulate tumor metastasis. The protein is Immediate early response gene 2 protein of Homo sapiens (Human).